The sequence spans 109 residues: Phosphoribosyl-AMP cyclohydrolase (109 aa).

Asp-80 is a binding site for Mg(2+). Cys-81 is a Zn(2+) binding site. Asp-82 and Asp-84 together coordinate Mg(2+). Positions 97 and 104 each coordinate Zn(2+).

This sequence belongs to the PRA-CH family. As to quaternary structure, homodimer. Mg(2+) is required as a cofactor. It depends on Zn(2+) as a cofactor.

The protein resides in the cytoplasm. It catalyses the reaction 1-(5-phospho-beta-D-ribosyl)-5'-AMP + H2O = 1-(5-phospho-beta-D-ribosyl)-5-[(5-phospho-beta-D-ribosylamino)methylideneamino]imidazole-4-carboxamide. The protein operates within amino-acid biosynthesis; L-histidine biosynthesis; L-histidine from 5-phospho-alpha-D-ribose 1-diphosphate: step 3/9. In terms of biological role, catalyzes the hydrolysis of the adenine ring of phosphoribosyl-AMP. In Clostridium beijerinckii (strain ATCC 51743 / NCIMB 8052) (Clostridium acetobutylicum), this protein is Phosphoribosyl-AMP cyclohydrolase.